Reading from the N-terminus, the 73-residue chain is Translation initiation factor IF-1 1 (73 aa).

Residues 1 to 72 enclose the S1-like domain; the sequence is MAKEELIEFG…TKGRINFRHK (72 aa).

This sequence belongs to the IF-1 family. Component of the 30S ribosomal translation pre-initiation complex which assembles on the 30S ribosome in the order IF-2 and IF-3, IF-1 and N-formylmethionyl-tRNA(fMet); mRNA recruitment can occur at any time during PIC assembly.

The protein localises to the cytoplasm. One of the essential components for the initiation of protein synthesis. Stabilizes the binding of IF-2 and IF-3 on the 30S subunit to which N-formylmethionyl-tRNA(fMet) subsequently binds. Helps modulate mRNA selection, yielding the 30S pre-initiation complex (PIC). Upon addition of the 50S ribosomal subunit IF-1, IF-2 and IF-3 are released leaving the mature 70S translation initiation complex. This is Translation initiation factor IF-1 1 from Cupriavidus pinatubonensis (strain JMP 134 / LMG 1197) (Cupriavidus necator (strain JMP 134)).